A 199-amino-acid polypeptide reads, in one-letter code: Recombination protein RecR (199 aa).

The C4-type zinc-finger motif lies at 59 to 74 (CLNCGNVGTSDICALC). Residues 82–176 (GELCVVEDVA…KLTSLAQGVP (95 aa)) form the Toprim domain.

It belongs to the RecR family.

Functionally, may play a role in DNA repair. It seems to be involved in an RecBC-independent recombinational process of DNA repair. It may act with RecF and RecO. In Ruegeria sp. (strain TM1040) (Silicibacter sp.), this protein is Recombination protein RecR.